The following is a 364-amino-acid chain: DNA polymerase IV (364 aa).

Residues 14–198 (IIHIDMDAFF…LPIEKFHGVG (185 aa)) form the UmuC domain. Mg(2+) contacts are provided by Asp-18 and Asp-116. The active site involves Glu-117.

It belongs to the DNA polymerase type-Y family. Monomer. Requires Mg(2+) as cofactor.

The protein resides in the cytoplasm. It carries out the reaction DNA(n) + a 2'-deoxyribonucleoside 5'-triphosphate = DNA(n+1) + diphosphate. Poorly processive, error-prone DNA polymerase involved in untargeted mutagenesis. Copies undamaged DNA at stalled replication forks, which arise in vivo from mismatched or misaligned primer ends. These misaligned primers can be extended by PolIV. Exhibits no 3'-5' exonuclease (proofreading) activity. May be involved in translesional synthesis, in conjunction with the beta clamp from PolIII. In Streptococcus pyogenes serotype M1, this protein is DNA polymerase IV.